We begin with the raw amino-acid sequence, 296 residues long: Cadherin-4 (296 aa).

3 Cadherin domains span residues 1 to 101 (NVPE…RPEF), 102 to 216 (INQV…PPEF), and 217 to 296 (TTST…MLTI). Topologically, residues 1–296 (NVPENSRGPF…ELNRAFMLTI (296 aa)) are extracellular. N-linked (GlcNAc...) asparagine glycans are attached at residues asparagine 107 and asparagine 236.

It localises to the cell membrane. In terms of biological role, cadherins are calcium-dependent cell adhesion proteins. They preferentially interact with themselves in a homophilic manner in connecting cells; cadherins may thus contribute to the sorting of heterogeneous cell types. May play an important role in retinal development. This chain is Cadherin-4 (Cdh4), found in Rattus norvegicus (Rat).